Reading from the N-terminus, the 1035-residue chain is Eukaryotic translation initiation factor 3 subunit A (1035 aa).

Residues 92–121 (LKKFIELAEKKVTEAQAKADEIQSSLESAA) are a coiled coil. The 185-residue stretch at 339 to 523 (MTKAASFVLL…GVLTFDTDVF (185 aa)) folds into the PCI domain. The stretch at 606 to 910 (ERRVIIEKKK…LRAKRAGLSE (305 aa)) forms a coiled coil. Composition is skewed to basic and acidic residues over residues 619-632 (TDALQRKQKEEETR) and 809-901 (KAAE…EARL). 2 disordered regions span residues 619-649 (TDALQRKQKEEETRKRIRTQQLQEAEKQRLA) and 809-1035 (KAAE…QQNQ). Low complexity-rich tracts occupy residues 943 to 953 (KEAAGGAAPEA) and 988 to 1004 (PPSQRSSQPPSRTQTPP).

It belongs to the eIF-3 subunit A family. Component of the eukaryotic translation initiation factor 3 (eIF-3) complex.

Its subcellular location is the cytoplasm. Functionally, RNA-binding component of the eukaryotic translation initiation factor 3 (eIF-3) complex, which is involved in protein synthesis of a specialized repertoire of mRNAs and, together with other initiation factors, stimulates binding of mRNA and methionyl-tRNAi to the 40S ribosome. The eIF-3 complex specifically targets and initiates translation of a subset of mRNAs involved in cell proliferation. In Emericella nidulans (strain FGSC A4 / ATCC 38163 / CBS 112.46 / NRRL 194 / M139) (Aspergillus nidulans), this protein is Eukaryotic translation initiation factor 3 subunit A (tif32).